Reading from the N-terminus, the 301-residue chain is UDP-N-acetylenolpyruvoylglucosamine reductase (301 aa).

In terms of domain architecture, FAD-binding PCMH-type spans 30–194 (VGGEADYLVF…LSVKFALAPG (165 aa)). Arginine 173 is a catalytic residue. The active-site Proton donor is the serine 223. The active site involves glutamate 293.

The protein belongs to the MurB family. FAD serves as cofactor.

The protein localises to the cytoplasm. The enzyme catalyses UDP-N-acetyl-alpha-D-muramate + NADP(+) = UDP-N-acetyl-3-O-(1-carboxyvinyl)-alpha-D-glucosamine + NADPH + H(+). The protein operates within cell wall biogenesis; peptidoglycan biosynthesis. Its function is as follows. Cell wall formation. In Streptococcus pneumoniae (strain JJA), this protein is UDP-N-acetylenolpyruvoylglucosamine reductase.